Consider the following 617-residue polypeptide: Sphingosine kinase 2 (617 aa).

Residues 1 to 140 are required for binding to sulfatide and phosphoinositides and for membrane localization; the sequence is MAPPPLLPVA…LSGDQEITPE (140 aa). A Nuclear localization signal motif is present at residues 87–95; that stretch reads RGRRGGRRR. Positions 143-290 constitute a DAGKc domain; it reads PRKPRLLILV…LDLLSVTLAS (148 aa). Residues 153–155 and 185–189 contribute to the ATP site; these read NPF and TERQN. 210 to 213 is a substrate binding site; that stretch reads SGDG. The active-site Proton donor/acceptor is the D212. ATP is bound by residues E217 and 242 to 244; that span reads GSG. Residue D309 coordinates substrate. Residues R316 and R322 each contribute to the ATP site. A phosphoserine mark is found at S358 and S364. Residues 371–472 are disordered; that stretch reads APAPAATHSP…GFLPPTHSAP (102 aa). T377 is modified (phosphothreonine). Residues 381-390 carry the Nuclear export signal motif; that stretch reads LHRSVSDLPL. Phosphoserine is present on residues S384 and S386. The segment covering 412 to 426 has biased composition (gly residues); it reads NGGGPELTGDWGGAG. At T578 the chain carries Phosphothreonine. An ATP-binding site is contributed by 586-588; it reads DGE.

As to quaternary structure, interacts with histone H3. Interacts with HDAC1, HDAC2, MBD2 and SIN3A. Interacts with EEF1A1; the interaction enhances SPHK2 kinase activity. Interacts with PHB2. Mg(2+) is required as a cofactor. In terms of processing, phosphorylated by PKD on Ser-384 and Ser-386 upon PMA treatment. Phosphorylation induces export from the nucleus to the cytoplasm. Phosphorylated by MAPK1 and MAPK2 at Thr-578, phosphorylation is induced by agonists such as EGF and PMA and increases kinase activity. Cleaved by CASP1 in apoptotic cells. The truncated form is released from cells. In terms of tissue distribution, expressed in heart, brain, liver, kidney and testis. Expressed by mast cells (at protein level). In the substantia nigra, expressed by dopaminergic neurons (at protein level).

Its subcellular location is the lysosome membrane. The protein localises to the cytoplasm. The protein resides in the cell membrane. It localises to the endoplasmic reticulum. It is found in the nucleus. Its subcellular location is the mitochondrion inner membrane. It catalyses the reaction a sphingoid base + ATP = a sphingoid 1-phosphate + ADP + H(+). The enzyme catalyses sphing-4-enine + ATP = sphing-4-enine 1-phosphate + ADP + H(+). The catalysed reaction is sphinganine + ATP = sphinganine 1-phosphate + ADP + H(+). It carries out the reaction (4R)-hydroxysphinganine + ATP = (4R)-hydroxysphinganine 1-phosphate + ADP + H(+). Its function is as follows. Catalyzes the phosphorylation of sphingosine to form sphingosine-1-phosphate (SPP), a lipid mediator with both intra- and extracellular functions. Also acts on D-erythro-dihydrosphingosine, D-erythro-sphingosine and L-threo-dihydrosphingosine. Binds phosphoinositides. In contrast to prosurvival SPHK1, has a positive effect on intracellular ceramide levels, inhibits cells growth and enhances apoptosis. In mitochondria, is important for cytochrome-c oxidase assembly and mitochondrial respiration. The SPP produced in mitochondria binds PHB2 and modulates the regulation via PHB2 of complex IV assembly and respiration. In nucleus, plays a role in epigenetic regulation of gene expression. Interacts with HDAC1 and HDAC2 and, through SPP production, inhibits their enzymatic activity, preventing the removal of acetyl groups from lysine residues with histones. Up-regulates acetylation of histone H3-K9, histone H4-K5 and histone H2B-K12. In nucleus, may have an inhibitory effect on DNA synthesis and cell cycle. In mast cells, is the main regulator of SPP production which mediates calcium influx, NF-kappa-B activation, cytokine production, such as TNF and IL6, and degranulation of mast cells. In dopaminergic neurons, is involved in promoting mitochondrial functions regulating ATP and ROS levels. Also involved in the regulation of glucose and lipid metabolism. This is Sphingosine kinase 2 from Mus musculus (Mouse).